Consider the following 349-residue polypeptide: Flap endonuclease 1-B (349 aa).

Residues 1–105 (MGIKGLTKLL…GELAKRLARR (105 aa)) are N-domain. Residue Asp34 coordinates Mg(2+). Position 71 (Arg71) interacts with DNA. Residues Asp87, Glu159, Glu161, Asp180, and Asp182 each coordinate Mg(2+). The tract at residues 123-254 (DMEKYSKRTV…QTALKLIRQH (132 aa)) is I-domain. Glu159 is a DNA binding site. Residues Gly232 and Asp234 each coordinate DNA. Asp234 contributes to the Mg(2+) binding site.

It belongs to the XPG/RAD2 endonuclease family. FEN1 subfamily. Interacts with PCNA. Three molecules of FEN1 bind to one PCNA trimer with each molecule binding to one PCNA monomer. PCNA stimulates the nuclease activity without altering cleavage specificity. The cofactor is Mg(2+). Post-translationally, phosphorylated. Phosphorylation upon DNA damage induces relocalization to the nuclear plasma.

It localises to the nucleus. The protein localises to the nucleolus. The protein resides in the nucleoplasm. Its subcellular location is the mitochondrion. In terms of biological role, structure-specific nuclease with 5'-flap endonuclease and 5'-3' exonuclease activities involved in DNA replication and repair. During DNA replication, cleaves the 5'-overhanging flap structure that is generated by displacement synthesis when DNA polymerase encounters the 5'-end of a downstream Okazaki fragment. It enters the flap from the 5'-end and then tracks to cleave the flap base, leaving a nick for ligation. Also involved in the long patch base excision repair (LP-BER) pathway, by cleaving within the apurinic/apyrimidinic (AP) site-terminated flap. Acts as a genome stabilization factor that prevents flaps from equilibrating into structures that lead to duplications and deletions. Also possesses 5'-3' exonuclease activity on nicked or gapped double-stranded DNA, and exhibits RNase H activity. Also involved in replication and repair of rDNA and in repairing mitochondrial DNA. This is Flap endonuclease 1-B from Physcomitrium patens (Spreading-leaved earth moss).